Here is a 490-residue protein sequence, read N- to C-terminus: GTPase Der (490 aa).

2 consecutive EngA-type G domains span residues 3–166 (PVVA…MEDL) and 203–376 (IKLA…DSST). Residues 9–16 (GRPNVGKS), 56–60 (DTGGI), 118–121 (NKTD), 209–216 (GRPNVGKS), 256–260 (DTAGV), and 321–324 (NKWD) contribute to the GTP site. The region spanning 377–461 (RRVGTSMLTR…PIRIQFKEGE (85 aa)) is the KH-like domain.

This sequence belongs to the TRAFAC class TrmE-Era-EngA-EngB-Septin-like GTPase superfamily. EngA (Der) GTPase family. In terms of assembly, associates with the 50S ribosomal subunit.

Its function is as follows. GTPase that plays an essential role in the late steps of ribosome biogenesis. The sequence is that of GTPase Der from Escherichia coli O81 (strain ED1a).